A 106-amino-acid polypeptide reads, in one-letter code: Iron-sulfur cluster assembly protein CyaY (106 aa).

The protein belongs to the frataxin family.

In terms of biological role, involved in iron-sulfur (Fe-S) cluster assembly. May act as a regulator of Fe-S biogenesis. The sequence is that of Iron-sulfur cluster assembly protein CyaY from Shigella flexneri.